A 305-amino-acid polypeptide reads, in one-letter code: ATP synthase gamma chain (305 aa).

This sequence belongs to the ATPase gamma chain family. As to quaternary structure, F-type ATPases have 2 components, CF(1) - the catalytic core - and CF(0) - the membrane proton channel. CF(1) has five subunits: alpha(3), beta(3), gamma(1), delta(1), epsilon(1). CF(0) has three main subunits: a, b and c.

The protein resides in the cell membrane. Its function is as follows. Produces ATP from ADP in the presence of a proton gradient across the membrane. The gamma chain is believed to be important in regulating ATPase activity and the flow of protons through the CF(0) complex. This chain is ATP synthase gamma chain, found in Streptomyces coelicolor (strain ATCC BAA-471 / A3(2) / M145).